A 237-amino-acid polypeptide reads, in one-letter code: CD99 antigen-like protein 2 (237 aa).

The first 25 residues, 1–25, serve as a signal peptide directing secretion; sequence MVARLTAFLVCLVFSLATLVQRGYG. Over 26 to 161 the chain is Extracellular; the sequence is DTDGFNLEDA…PGSGISTETG (136 aa). Residues 47-157 form a disordered region; sequence DHFSTTTRRP…SNDDPGSGIS (111 aa). Low complexity-rich tracts occupy residues 51-66 and 74-84; these read TTTR…ANPA and TTTTRRPGTTR. The span at 102–111 shows a compositional bias: basic and acidic residues; that stretch reads DDRNDLDGPK. The O-linked (Xyl...) (chondroitin sulfate) serine glycan is linked to Ser-154. Residues 162–182 form a helical membrane-spanning segment; it reads TIAGVASALAMALIGAVSSYI. The Cytoplasmic portion of the chain corresponds to 183 to 237; that stretch reads SYQQKKFCFSIQQGLNADYVKGENLEAVVCEEPQVTYSKQETQSAEPPPPEPPRI. Polar residues predominate over residues 218-227; the sequence is TYSKQETQSA. The disordered stretch occupies residues 218–237; that stretch reads TYSKQETQSAEPPPPEPPRI. A compositionally biased stretch (pro residues) spans 228-237; it reads EPPPPEPPRI.

The protein belongs to the CD99 family. In terms of processing, O-glycosylated. In terms of tissue distribution, highly expressed in the nervous system, including brain, dentate nucleus of hippocampus, granular and Purkinje cells of cerebellum, brain stem nucleus and choroid plexus. Expressed in peripheral blood T- and B-cells and neutrophils (at protein level). Almost undetectable in bone marrow-derived neutrophils (at protein level). Also expressed in thymocytes (at protein level) with higher expression in cortical thymocytes than in medullary thymocytes. Expressed at high levels in testis (mostly in germ cells and Sertoli cells) and ovary (mostly in granulosa cells). Expressed in lung, heart, kidney and liver (at protein level); however, expression in heart, kidney and liver seems restricted to endothelial cells (at protein level). Highly expressed in endothelial cells and to a lower level in vascular smooth muscle cells (at protein level). Low expression in spleen.

Its subcellular location is the cell membrane. It is found in the cell junction. It localises to the secreted. Its function is as follows. Plays a role in a late step of leukocyte extravasation helping cells to overcome the endothelial basement membrane. Acts at the same site as, but independently of, PECAM1. Homophilic adhesion molecule, but these interactions may not be required for cell aggregation. The protein is CD99 antigen-like protein 2 (Cd99l2) of Mus musculus (Mouse).